Here is a 30-residue protein sequence, read N- to C-terminus: Thylakoid lumenal 17 kDa protein (30 aa).

The protein resides in the plastid. It localises to the chloroplast thylakoid lumen. The protein is Thylakoid lumenal 17 kDa protein of Spinacia oleracea (Spinach).